A 720-amino-acid chain; its full sequence is Glycine--tRNA ligase beta subunit (720 aa).

This sequence belongs to the class-II aminoacyl-tRNA synthetase family. In terms of assembly, tetramer of two alpha and two beta subunits.

It localises to the cytoplasm. It carries out the reaction tRNA(Gly) + glycine + ATP = glycyl-tRNA(Gly) + AMP + diphosphate. The polypeptide is Glycine--tRNA ligase beta subunit (Acidovorax sp. (strain JS42)).